The chain runs to 147 residues: UPF0216 protein MK1676 (147 aa).

This sequence belongs to the UPF0216 family.

The chain is UPF0216 protein MK1676 from Methanopyrus kandleri (strain AV19 / DSM 6324 / JCM 9639 / NBRC 100938).